The primary structure comprises 172 residues: Transcriptional activator protein (172 aa).

Residues 56 to 71 carry the Nuclear localization signal motif; it reads KAQHRIAKHKAIRRRR. A zinc finger lies at 76-93; that stretch reads CGCSIFYHIKCADHGFTH. Residues 119-172 form a disordered region; that stretch reads DHAGGRSSIHTDKDIPHPSQVQSQPQESTGSPQSIPELPSLDDIDSSFWDDIFK. The segment covering 137–152 has biased composition (polar residues); it reads SQVQSQPQESTGSPQS. Residues 158 to 172 are transactivation; it reads SLDDIDSSFWDDIFK.

The protein belongs to the geminiviridae transcriptional activator protein family. In terms of assembly, monomer. Homodimer. Homooligomer. Self-interaction correlates with nuclear localization and efficient activation of transcription. Monomers suppress local silencing by interacting with and inactivating host adenosine kinase 2 (ADK2) in the cytoplasm. Interacts with and inhibits host SNF1 kinase. Binds to ssDNA. In terms of processing, phosphorylated.

The protein resides in the host nucleus. It is found in the host cytoplasm. Strong activator of the late viral genes promoters. Enhances the expression of the capsid protein and nuclear shuttle protein. Acts as a suppressor of RNA-mediated gene silencing, also known as post-transcriptional gene silencing (PTGS), a mechanism of plant viral defense that limits the accumulation of viral RNAs. Suppresses the host RNA silencing by inhibiting adenosine kinase 2 (ADK2), a kinase involved in a general methylation pathway. Also suppresses the host basal defense by interacting with and inhibiting SNF1 kinase, a key regulator of cell metabolism implicated in innate antiviral defense. Determines pathogenicity. This Bean golden yellow mosaic virus (isolate Puerto Rico-Japan) (BGYMV) protein is Transcriptional activator protein.